A 507-amino-acid polypeptide reads, in one-letter code: DNA ligase B (507 aa).

Residues 1 to 172 (MLLHDVAITS…AAAAGLSGAA (172 aa)) are not required for adenylyltransferase activity, required for nick joining. ATP is bound at residue Glu-209. The active-site N6-AMP-lysine intermediate is Lys-211. The ATP site is built by Arg-216, Arg-231, Glu-260, Phe-300, Arg-372, and Lys-378.

This sequence belongs to the ATP-dependent DNA ligase family. In terms of assembly, monomer. Mg(2+) is required as a cofactor.

It carries out the reaction ATP + (deoxyribonucleotide)n-3'-hydroxyl + 5'-phospho-(deoxyribonucleotide)m = (deoxyribonucleotide)n+m + AMP + diphosphate.. In terms of biological role, DNA ligase that seals nicks in double-stranded DNA during DNA replication, DNA recombination and DNA repair. This is DNA ligase B (ligB) from Mycobacterium tuberculosis (strain ATCC 25618 / H37Rv).